A 246-amino-acid chain; its full sequence is 1-(5-phosphoribosyl)-5-[(5-phosphoribosylamino)methylideneamino] imidazole-4-carboxamide isomerase (246 aa).

Asp8 (proton acceptor) is an active-site residue. Asp131 serves as the catalytic Proton donor.

It belongs to the HisA/HisF family.

It is found in the cytoplasm. The enzyme catalyses 1-(5-phospho-beta-D-ribosyl)-5-[(5-phospho-beta-D-ribosylamino)methylideneamino]imidazole-4-carboxamide = 5-[(5-phospho-1-deoxy-D-ribulos-1-ylimino)methylamino]-1-(5-phospho-beta-D-ribosyl)imidazole-4-carboxamide. It functions in the pathway amino-acid biosynthesis; L-histidine biosynthesis; L-histidine from 5-phospho-alpha-D-ribose 1-diphosphate: step 4/9. The sequence is that of 1-(5-phosphoribosyl)-5-[(5-phosphoribosylamino)methylideneamino] imidazole-4-carboxamide isomerase from Albidiferax ferrireducens (strain ATCC BAA-621 / DSM 15236 / T118) (Rhodoferax ferrireducens).